Here is a 94-residue protein sequence, read N- to C-terminus: MTINYQFGDVDAHGAMIRAQAGSLEAEHQAIISDVLTASDFWGGAGSAACQGFITQLGRNFQVIYEQANAHGQKVQAAGNNMAQTDSAVGSSWA.

Belongs to the WXG100 family. ESAT-6 subfamily.

It localises to the secreted. This chain is ESAT-6-like protein EsxI, found in Mycobacterium tuberculosis (strain ATCC 25618 / H37Rv).